The sequence spans 504 residues: Aspartyl/glutamyl-tRNA(Asn/Gln) amidotransferase subunit B (504 aa).

The protein belongs to the GatB/GatE family. GatB subfamily. As to quaternary structure, heterotrimer of A, B and C subunits.

It catalyses the reaction L-glutamyl-tRNA(Gln) + L-glutamine + ATP + H2O = L-glutaminyl-tRNA(Gln) + L-glutamate + ADP + phosphate + H(+). The catalysed reaction is L-aspartyl-tRNA(Asn) + L-glutamine + ATP + H2O = L-asparaginyl-tRNA(Asn) + L-glutamate + ADP + phosphate + 2 H(+). Functionally, allows the formation of correctly charged Asn-tRNA(Asn) or Gln-tRNA(Gln) through the transamidation of misacylated Asp-tRNA(Asn) or Glu-tRNA(Gln) in organisms which lack either or both of asparaginyl-tRNA or glutaminyl-tRNA synthetases. The reaction takes place in the presence of glutamine and ATP through an activated phospho-Asp-tRNA(Asn) or phospho-Glu-tRNA(Gln). In Tropheryma whipplei (strain Twist) (Whipple's bacillus), this protein is Aspartyl/glutamyl-tRNA(Asn/Gln) amidotransferase subunit B.